Reading from the N-terminus, the 480-residue chain is Amino acid permease 5 (480 aa).

The tract at residues 1–25 (MVVQNVQDLDVLPKHSSDSFDDDGR) is disordered. Over 1 to 31 (MVVQNVQDLDVLPKHSSDSFDDDGRPKRTGT) the chain is Cytoplasmic. Residues 11-25 (VLPKHSSDSFDDDGR) show a composition bias toward basic and acidic residues. The next 2 membrane-spanning stretches (helical) occupy residues 32-52 (VWTASAHIITAVIGSGVLSLA) and 53-73 (WAVAQIGWIGGPVAMLLFSFV). At 74-120 (TFYTSTLLCSCYRSGDSVTGKRNYTYMDAIHSNLGGIKVKVCGVVQY) the chain is on the cytoplasmic side. Residues 121–141 (VNLFGTAIGYTIASAISLVAI) form a helical membrane-spanning segment. The Extracellular portion of the chain corresponds to 142 to 157 (QRTSCQQMNGPNDPCH). A helical membrane pass occupies residues 158–178 (VNGNVYMIAFGIVQIIFSQIP). At 179 to 182 (DFDQ) the chain is on the cytoplasmic side. Residues 183-203 (LWWLSIVAAVMSFAYSAIGLG) traverse the membrane as a helical segment. At 204–241 (LGVSKVVENKEIKGSLTGVTVGTVTLSGTVTSSQKIWR) the chain is on the extracellular side. The helical transmembrane segment at 242-262 (TFQSLGNIAFAYSYSMILIEI) threads the bilayer. Topologically, residues 263–280 (QDTVKSPPAEVNTMRKAT) are cytoplasmic. Residues 281-301 (FVSVAVTTVFYMLCGCVGYAA) traverse the membrane as a helical segment. Residues 302–328 (FGDNAPGNLLAHGGFRNPYWLLDIANL) lie on the Extracellular side of the membrane. A helical membrane pass occupies residues 329–349 (AIVIHLVGAYQVYCQPLFAFV). Residues 350-383 (EKEASRRFPESEFVTKEIKIQLFPGKPFNLNLFR) are Cytoplasmic-facing. The chain crosses the membrane as a helical span at residues 384-404 (LVWRTFFVMTTTLISMLMPFF). Residues 405 to 406 (ND) are Extracellular-facing. The chain crosses the membrane as a helical span at residues 407–427 (VVGLLGAIGFWPLTVYFPVEM). Residues 428–445 (YIAQKNVPRWGTKWVCLQ) are Cytoplasmic-facing. Residues 446–466 (VLSVTCLFVSVAAAAGSVIGI) traverse the membrane as a helical segment. Residues 467–480 (VSDLKVYKPFQSEF) are Extracellular-facing.

Belongs to the amino acid/polyamine transporter 2 family. Amino acid/auxin permease (AAAP) (TC 2.A.18.2) subfamily. Expressed in leaves, stems, roots, siliques and flowers.

It localises to the cell membrane. Inhibited by 2,4-dinitrophenol. Functionally, amino acid-proton symporter. Stereospecific transporter with a broad specificity for glutamate and both neutral and basic amino acids. Reduced affinities for asparagine and valine. High affinity transport of the cationic amino acids arginine and lysine, but not of histidine. The sequence is that of Amino acid permease 5 (AAP5) from Arabidopsis thaliana (Mouse-ear cress).